Reading from the N-terminus, the 267-residue chain is Orotidine 5'-phosphate decarboxylase (267 aa).

Residues Asp-37, Lys-59 to His-61, Asp-91 to Thr-100, Tyr-217, and Arg-235 contribute to the substrate site. The Proton donor role is filled by Lys-93.

It belongs to the OMP decarboxylase family.

The catalysed reaction is orotidine 5'-phosphate + H(+) = UMP + CO2. It functions in the pathway pyrimidine metabolism; UMP biosynthesis via de novo pathway; UMP from orotate: step 2/2. This is Orotidine 5'-phosphate decarboxylase (URA3) from Kluyveromyces marxianus (Yeast).